Consider the following 392-residue polypeptide: Protein RecA (392 aa).

Positions 1–21 (MALETKPAQDPATEIKHELDP) are disordered. 83 to 90 (GPESSGKT) lines the ATP pocket. Residues 372-392 (DAAKDTKATAAPAAKSSRAKA) are disordered. Residues 379–392 (ATAAPAAKSSRAKA) show a composition bias toward low complexity.

This sequence belongs to the RecA family.

The protein localises to the cytoplasm. Functionally, can catalyze the hydrolysis of ATP in the presence of single-stranded DNA, the ATP-dependent uptake of single-stranded DNA by duplex DNA, and the ATP-dependent hybridization of homologous single-stranded DNAs. It interacts with LexA causing its activation and leading to its autocatalytic cleavage. The protein is Protein RecA of Bifidobacterium breve.